Consider the following 89-residue polypeptide: MSRSLKKGPYINLKLEKKVLAMNESGKKAVIKTWARASMISPDFVGHTIAVHNGNKFIPVFVTENMVGHKLGEFSPTRTFRGHAGNKKK.

Belongs to the universal ribosomal protein uS19 family.

Its function is as follows. Protein S19 forms a complex with S13 that binds strongly to the 16S ribosomal RNA. This is Small ribosomal subunit protein uS19 from Porphyromonas gingivalis (strain ATCC 33277 / DSM 20709 / CIP 103683 / JCM 12257 / NCTC 11834 / 2561).